A 91-amino-acid polypeptide reads, in one-letter code: MSDYNMVAVVKVMPTDPEVNLDELEAKLKEVLPEKFGLAKVEREPIAFGLVALKFYVLAKDEEGYDLDQVLEAFRQVENVESAEVETVSRI.

The protein belongs to the EF-1-beta/EF-1-delta family.

Functionally, promotes the exchange of GDP for GTP in EF-1-alpha/GDP, thus allowing the regeneration of EF-1-alpha/GTP that could then be used to form the ternary complex EF-1-alpha/GTP/AAtRNA. The protein is Elongation factor 1-beta of Thermococcus gammatolerans (strain DSM 15229 / JCM 11827 / EJ3).